The sequence spans 102 residues: Peptide chaperone MftB (102 aa).

This sequence belongs to the peptide chaperone MftB family.

In terms of biological role, peptide chaperone involved in the biosynthesis of the enzyme cofactor mycofactocin (MFT). Binds MftA and MftC with high affinity, and is essential for MftC activity on MftA, likely via the formation of a ternary complex. Is required for the in vivo ethanol assimilation in M.smegmatis. This is Peptide chaperone MftB from Mycolicibacterium smegmatis (strain ATCC 700084 / mc(2)155) (Mycobacterium smegmatis).